A 2198-amino-acid polypeptide reads, in one-letter code: Activating signal cointegrator 1 complex subunit 3 (2198 aa).

Ser-12 is modified (phosphoserine). Coiled-coil stretches lie at residues 18–81 (KQDN…KQIV) and 328–356 (IQSE…KAGE). The region spanning 487–670 (ETAYNTNENM…FLHVNPYIGL (184 aa)) is the Helicase ATP-binding 1 domain. 500 to 507 (APTGAGKT) lines the ATP pocket. Position 573 is an N6-acetyllysine (Lys-573). The DEVH box motif lies at 612–615 (DEVH). Positions 697–915 (QLNNMDEVCY…GTVTNVEEAV (219 aa)) constitute a Helicase C-terminal 1 domain. The SEC63 1 domain occupies 979–1288 (STDLGRTASH…GAEAVCIINF (310 aa)). The Helicase ATP-binding 2 domain occupies 1337 to 1512 (HTLYHTDCNV…WLNIKQMGLF (176 aa)). Position 1350–1357 (1350–1357 (APTGSGKT)) interacts with ATP. A DEIH box motif is present at residues 1454–1457 (DEIH). The 196-residue stretch at 1545 to 1740 (PAFQAIRSHS…VLSDHLNAEI (196 aa)) folds into the Helicase C-terminal 2 domain. Residues 1813–2177 (PLTCGRIASY…LGLDQQYDIY (365 aa)) enclose the SEC63 2 domain.

The protein belongs to the helicase family. As to quaternary structure, identified in the ASCC complex that contains ASCC1, ASCC2 and ASCC3. Functions as a scaffolding subunit that interacts directly with both ASCC1 and ASCC2. Interacts directly with ALKBH3, and thereby recruits ALKBH3 to the ASCC complex. Part of the ASC-1/TRIP4 complex, that contains TRIP4, ASCC1, ASCC2 and ASCC3. Part of the RQT (ribosome quality control trigger) complex, that contains ASCC2, ASCC3 and TRIP4. Associates with ribosomes; recruited to collided ribosomes. Interacts with ZCCHC4. Interacts with ZNF598. Interacts with RPS3.

Its subcellular location is the nucleus. It is found in the nucleus speckle. The protein localises to the cytoplasm. The protein resides in the cytosol. The enzyme catalyses Couples ATP hydrolysis with the unwinding of duplex DNA by translocating in the 3'-5' direction.. It carries out the reaction ATP + H2O = ADP + phosphate + H(+). Functionally, ATPase involved both in DNA repair and rescue of stalled ribosomes. 3'-5' DNA helicase involved in repair of alkylated DNA: promotes DNA unwinding to generate single-stranded substrate needed for ALKBH3, enabling ALKBH3 to process alkylated N3-methylcytosine (3mC) within double-stranded regions. Also involved in activation of the ribosome quality control (RQC) pathway, a pathway that degrades nascent peptide chains during problematic translation. Drives the splitting of stalled ribosomes that are ubiquitinated in a ZNF598-dependent manner, as part of the ribosome quality control trigger (RQT) complex. Part of the ASC-1 complex that enhances NF-kappa-B, SRF and AP1 transactivation. This Mus musculus (Mouse) protein is Activating signal cointegrator 1 complex subunit 3 (Ascc3).